The sequence spans 129 residues: Small ribosomal subunit protein uS8 (129 aa).

Belongs to the universal ribosomal protein uS8 family. As to quaternary structure, part of the 30S ribosomal subunit. Contacts proteins S5 and S12.

Functionally, one of the primary rRNA binding proteins, it binds directly to 16S rRNA central domain where it helps coordinate assembly of the platform of the 30S subunit. The sequence is that of Small ribosomal subunit protein uS8 from Legionella pneumophila (strain Corby).